The sequence spans 99 residues: NADH-quinone oxidoreductase subunit K (99 aa).

3 helical membrane passes run P3–L23, I28–F48, and V59–I79.

This sequence belongs to the complex I subunit 4L family. In terms of assembly, NDH-1 is composed of 14 different subunits. Subunits NuoA, H, J, K, L, M, N constitute the membrane sector of the complex.

Its subcellular location is the cell membrane. It catalyses the reaction a quinone + NADH + 5 H(+)(in) = a quinol + NAD(+) + 4 H(+)(out). In terms of biological role, NDH-1 shuttles electrons from NADH, via FMN and iron-sulfur (Fe-S) centers, to quinones in the respiratory chain. The immediate electron acceptor for the enzyme in this species is believed to be a menaquinone. Couples the redox reaction to proton translocation (for every two electrons transferred, four hydrogen ions are translocated across the cytoplasmic membrane), and thus conserves the redox energy in a proton gradient. The chain is NADH-quinone oxidoreductase subunit K from Mycolicibacterium gilvum (strain PYR-GCK) (Mycobacterium gilvum (strain PYR-GCK)).